A 184-amino-acid polypeptide reads, in one-letter code: dCTP deaminase (184 aa).

Residues 107–112 (KSTYAR), 131–133 (TLE), Q152, Y166, and Q176 contribute to the dCTP site. The active-site Proton donor/acceptor is the E133.

This sequence belongs to the dCTP deaminase family. Homotrimer.

The catalysed reaction is dCTP + H2O + H(+) = dUTP + NH4(+). It participates in pyrimidine metabolism; dUMP biosynthesis; dUMP from dCTP (dUTP route): step 1/2. In terms of biological role, catalyzes the deamination of dCTP to dUTP. This is dCTP deaminase from Erythrobacter litoralis (strain HTCC2594).